The primary structure comprises 429 residues: uncharacterized protein (429 aa).

The next 10 membrane-spanning stretches (helical) occupy residues 26–46, 51–71, 99–119, 135–155, 173–193, 223–243, 278–298, 311–331, 361–381, and 407–427; these read VALTGAAAVVVLPVITSHDIF, TGIDWDVIFLLVGMMIIVGVL, LVLVSALASALLDNVTTVLLI, TSFLMAEVFASNIGGAATLVG, FMLHLTPLVVIVLIALIAVLP, LLVKCGAVLVLVFAAFVAHPV, TLLFFAGLFIMVGALVKTGVV, GNIVATAFLILGVSAPISGII, WWALALGADFGGNLTAIGASA, and VVTAVSIALAAIYLWLRYFVL.

Belongs to the CitM (TC 2.A.11) transporter family.

It localises to the cell membrane. This is an uncharacterized protein from Mycobacterium tuberculosis (strain ATCC 25618 / H37Rv).